A 197-amino-acid chain; its full sequence is RNA polymerase II subunit A C-terminal domain phosphatase ssup-72 (197 aa).

Ser39 bears the Phosphoserine mark.

This sequence belongs to the SSU72 phosphatase family. As to quaternary structure, may interact with synd-1 (via C-terminus); the interaction may prevent ssup-72 binding to RNA polymerase II ama-1. May interact with RNA polymerase II ama-1. In terms of processing, may be phosphorylated by kin-20. As to expression, expressed in epidermis, intestine and nervous system.

Its subcellular location is the nucleus. The enzyme catalyses O-phospho-L-seryl-[protein] + H2O = L-seryl-[protein] + phosphate. It carries out the reaction O-phospho-L-threonyl-[protein] + H2O = L-threonyl-[protein] + phosphate. Protein phosphatase that dephosphorylates 'Ser-5' of the heptad repeats YSPTSPS in the C-terminal domain of the large RNA polymerase II subunit ama-1. By regulating the phosphorylation status of ama-1 and thus ama-1 binding to specific polyadenylation sites, regulates alternative polyadenylation of pre-mRNAs, including unc-44 and dlk-1 mRNAs. This results in the tissue-specific expression of unc-44 isoforms. The protein is RNA polymerase II subunit A C-terminal domain phosphatase ssup-72 of Caenorhabditis elegans.